A 707-amino-acid polypeptide reads, in one-letter code: Nucleolin (707 aa).

Residues 1–308 (MVKLAKAGKT…KVEGSEPTTP (308 aa)) are disordered. An N6-acetyllysine mark is found at Lys-9, Lys-15, and Lys-16. A compositionally biased stretch (acidic residues) spans 24-46 (VEEDSEDEEMSEDEDDSSGEEEV). A phosphoserine mark is found at Ser-28, Ser-34, Ser-40, and Ser-41. A compositionally biased stretch (low complexity) spans 56–92 (ATTTPAKKVVVSQTKKAAVPTPAKKAAVTPGKKAVAT). Repeat unit 1 spans residues 58 to 65 (TTPAKKVV). The 8 X 8 AA tandem repeats of X-T-P-X-K-K-X-X stretch occupies residues 58-135 (TTPAKKVVVS…GAATPAKGAK (78 aa)). At Ser-67 the chain carries Phosphoserine. Thr-69, Thr-76, Thr-84, and Thr-92 each carry phosphothreonine. 3 consecutive repeat copies span residues 75–82 (PTPAKKAA), 83–90 (VTPGKKAV), and 91–98 (ATPAKKNI). Lys-96 carries the post-translational modification N6-acetyllysine. A Phosphothreonine modification is found at Thr-99. A 5; truncated repeat occupies 99-104 (TPAKVI). Residue Lys-102 is modified to N6-acetyllysine. The stretch at 105–112 (PTPGKKGA) is repeat 6. Thr-106 carries the post-translational modification Phosphothreonine. N6-acetyllysine is present on residues Lys-109 and Lys-116. 2 repeat units span residues 120 to 127 (PTPGKKGA) and 128 to 135 (ATPAKGAK). The residue at position 121 (Thr-121) is a Phosphothreonine. Residues 121–137 (TPGKKGAATPAKGAKNG) are compositionally biased toward low complexity. Lys-124 is modified (N6-acetyllysine). A phosphoserine mark is found at Ser-145 and Ser-157. The span at 145–170 (SDEDEDEEDEDDSDEDEDDEEEDEFE) shows a compositional bias: acidic residues. The segment covering 179–188 (PAKAAPAAPA) has biased composition (low complexity). 2 positions are modified to phosphoserine: Ser-189 and Ser-212. Over residues 189 to 217 (SEDEEDDEDEDDEEDDDEEEEDDSEEEVM) the composition is skewed to acidic residues. Thr-220 carries the post-translational modification Phosphothreonine. Residues 241-273 (EEEDDEEEDEDDEDEDDEEEDDEDDDEEEEEEE) are compositionally biased toward acidic residues. A compositionally biased stretch (basic and acidic residues) spans 286 to 302 (MTKQKEAPEAKKQKVEG). Residue Lys-299 forms a Glycyl lysine isopeptide (Lys-Gly) (interchain with G-Cter in SUMO1); alternate linkage. Lys-299 is covalently cross-linked (Glycyl lysine isopeptide (Lys-Gly) (interchain with G-Cter in SUMO2); alternate). Ser-303 is subject to Phosphoserine. RRM domains are found at residues 309 to 385 (FNLF…KPKG) and 395 to 468 (RTLL…YTGE). Lys-320 carries the N6-acetyllysine modification. A Glycyl lysine isopeptide (Lys-Gly) (interchain with G-Cter in SUMO1); alternate cross-link involves residue Lys-326. Lys-326 is covalently cross-linked (Glycyl lysine isopeptide (Lys-Gly) (interchain with G-Cter in SUMO2); alternate). An N6-acetyllysine modification is found at Lys-350. A Phosphoserine modification is found at Ser-358. Thr-369 carries the phosphothreonine modification. A Glycyl lysine isopeptide (Lys-Gly) (interchain with G-Cter in SUMO2) cross-link involves residue Lys-372. Residue Lys-379 forms a Glycyl lysine isopeptide (Lys-Gly) (interchain with G-Cter in SUMO2); alternate linkage. Lys-379 is subject to N6-acetyllysine; alternate. The residue at position 400 (Lys-400) is an N6-acetyllysine. Ser-403 carries the phosphoserine modification. Residue Thr-407 is modified to Phosphothreonine. N6-acetyllysine is present on residues Lys-429 and Lys-446. Residues Ser-460 and Ser-462 each carry the phosphoserine modification. An N6-acetyllysine mark is found at Lys-469 and Lys-478. 2 consecutive RRM domains span residues 487 to 561 (KTLV…LQGS) and 569 to 644 (KTLF…WAKP). Lys-514 participates in a covalent cross-link: Glycyl lysine isopeptide (Lys-Gly) (interchain with G-Cter in SUMO2); alternate. Residue Lys-514 is modified to N6-acetyllysine; alternate. Lys-522 and Lys-569 each carry N6-acetyllysine. Lys-574 participates in a covalent cross-link: Glycyl lysine isopeptide (Lys-Gly) (interchain with G-Cter in SUMO2); alternate. Lys-574 bears the N6-acetyllysine; alternate mark. At Ser-577 the chain carries Phosphoserine. Residue Lys-586 forms a Glycyl lysine isopeptide (Lys-Gly) (interchain with G-Cter in SUMO1); alternate linkage. Lys-586 participates in a covalent cross-link: Glycyl lysine isopeptide (Lys-Gly) (interchain with G-Cter in SUMO2); alternate. Phosphoserine is present on residues Ser-588 and Ser-616. A Glycyl lysine isopeptide (Lys-Gly) (interchain with G-Cter in SUMO2) cross-link involves residue Lys-621. A disordered region spans residues 639–707 (LDWAKPKGEG…KPQGKKTKFE (69 aa)). N6-acetyllysine is present on Lys-643. Over residues 647 to 696 (EGGFGGRGGGRGGFGGRGGGRGGRGGFGGRGRGGFGGRGGFRGGRGGGGD) the composition is skewed to gly residues. 9 positions are modified to asymmetric dimethylarginine: Arg-653, Arg-657, Arg-663, Arg-667, Arg-670, Arg-676, Arg-678, Arg-684, and Arg-688. Arg-691 is subject to Asymmetric dimethylarginine; alternate. Arg-691 carries the omega-N-methylarginine; alternate modification.

In terms of assembly, identified in a IGF2BP1-dependent mRNP granule complex containing untranslated mRNAs. Component of the SWAP complex that consists of NPM1, NCL/nucleolin, PARP1 and SWAP70. Component of a complex which is at least composed of HTATSF1/Tat-SF1, the P-TEFb complex components CDK9 and CCNT1, RNA polymerase II, SUPT5H, and NCL/nucleolin. Interacts with AICDA. Interacts with APTX. Interacts with C1QBP. Interacts with ERBB4. Interacts (via C-terminus) with FMR1 isoform 6 (via N-terminus). Interacts with GZF1; this interaction is important for nucleolar localization of GZF1. Interacts with NSUN2. Interacts with NVL. Interacts (via N-terminus domain) with SETX. Interacts (via RRM1 and C-terminal RRM4/Arg/Gly-rich domains) with TERT; the interaction is important for nucleolar localization of TERT. Interacts with WDR46. Interacts with ZFP36. Interacts with LRRC34. Interacts with RRP1B. Interacts with HNRNPU; this interaction occurs during mitosis. Interacts with RIOK1; RIOK1 recruits NCL to PRMT5 for symmetrically methylation. Interacts with ZBTB7B. Interacts with MDK; this interaction promotes NCL clustering and lateral movements of this complex into lipid rafts leading to MDK internalization. Interacts with HDGF. Interacts with ALKBH2. Interacts with IGFBP5; this interaction is necessary for IGFBP5 localization to the nucleus. Interacts with DDX24 (when ubiquitinated); this interaction may be important during ribosome biogenesis. In terms of processing, some glutamate residues are glycylated by TTLL8. This modification occurs exclusively on glutamate residues and results in a glycine chain on the gamma-carboxyl group. Post-translationally, symmetrically methylated by PRMT5. Expressed in B-cells that have been induced to switch to various Ig isotypes.

The protein localises to the nucleus. Its subcellular location is the nucleolus. It is found in the cytoplasm. Functionally, nucleolin is the major nucleolar protein of growing eukaryotic cells. It is found associated with intranucleolar chromatin and pre-ribosomal particles. It induces chromatin decondensation by binding to histone H1. It is thought to play a role in pre-rRNA transcription and ribosome assembly. May play a role in the process of transcriptional elongation. Binds RNA oligonucleotides with 5'-UUAGGG-3' repeats more tightly than the telomeric single-stranded DNA 5'-TTAGGG-3' repeats. The chain is Nucleolin (Ncl) from Mus musculus (Mouse).